The sequence spans 142 residues: Putative thiosulfate sulfurtransferase, mitochondrial (142 aa).

Residues 1–25 (MFSKTLSVSRLLMTRSFYSSTVVKN) constitute a mitochondrion transit peptide. The region spanning 43–140 (GDKSTVLIDV…SWLEWSDKIK (98 aa)) is the Rhodanese domain. The active-site Cysteine persulfide intermediate is the cysteine 104.

It is found in the mitochondrion. It carries out the reaction thiosulfate + hydrogen cyanide = thiocyanate + sulfite + 2 H(+). Functionally, thiosulfate sulfurtransferase which catalyzes the transfer of sulfane sulfur from thiosulfate to cyanide. The polypeptide is Putative thiosulfate sulfurtransferase, mitochondrial (Schizosaccharomyces pombe (strain 972 / ATCC 24843) (Fission yeast)).